The chain runs to 36 residues: Peroxiredoxin-4 (36 aa).

Belongs to the peroxiredoxin family. AhpC/Prx1 subfamily. Homodimer; disulfide-linked, upon oxidation. Venom gland.

It is found in the secreted. The catalysed reaction is a hydroperoxide + [thioredoxin]-dithiol = an alcohol + [thioredoxin]-disulfide + H2O. In terms of biological role, venom peroxiredoxin enzyme that may play a role as part of a redox pathway leading to the structural/functional diversification of toxins through a disulfide bond engineering mechanism. The chain is Peroxiredoxin-4 from Crotalus atrox (Western diamondback rattlesnake).